Reading from the N-terminus, the 121-residue chain is Large ribosomal subunit protein uL22 (121 aa).

This sequence belongs to the universal ribosomal protein uL22 family. Part of the 50S ribosomal subunit.

Functionally, this protein binds specifically to 23S rRNA; its binding is stimulated by other ribosomal proteins, e.g. L4, L17, and L20. It is important during the early stages of 50S assembly. It makes multiple contacts with different domains of the 23S rRNA in the assembled 50S subunit and ribosome. The globular domain of the protein is located near the polypeptide exit tunnel on the outside of the subunit, while an extended beta-hairpin is found that lines the wall of the exit tunnel in the center of the 70S ribosome. This is Large ribosomal subunit protein uL22 from Micrococcus luteus (strain ATCC 4698 / DSM 20030 / JCM 1464 / CCM 169 / CCUG 5858 / IAM 1056 / NBRC 3333 / NCIMB 9278 / NCTC 2665 / VKM Ac-2230) (Micrococcus lysodeikticus).